A 197-amino-acid polypeptide reads, in one-letter code: Phosphoheptose isomerase (197 aa).

Residues 40-197 (CIASIAQGGK…LVEHSIFGKQ (158 aa)) enclose the SIS domain. Residue 55–57 (NGG) coordinates substrate. Zn(2+) contacts are provided by His-64 and Glu-68. Substrate contacts are provided by residues Glu-68, 97–98 (ND), 123–125 (STS), Ser-128, and Gln-175. Residues Gln-175 and His-183 each contribute to the Zn(2+) site.

This sequence belongs to the SIS family. GmhA subfamily. As to quaternary structure, homotetramer. Requires Zn(2+) as cofactor.

It is found in the cytoplasm. It catalyses the reaction 2 D-sedoheptulose 7-phosphate = D-glycero-alpha-D-manno-heptose 7-phosphate + D-glycero-beta-D-manno-heptose 7-phosphate. It functions in the pathway carbohydrate biosynthesis; D-glycero-D-manno-heptose 7-phosphate biosynthesis; D-glycero-alpha-D-manno-heptose 7-phosphate and D-glycero-beta-D-manno-heptose 7-phosphate from sedoheptulose 7-phosphate: step 1/1. The protein operates within capsule biogenesis; capsule polysaccharide biosynthesis. Functionally, catalyzes the isomerization of sedoheptulose 7-phosphate in D-glycero-D-manno-heptose 7-phosphate. The polypeptide is Phosphoheptose isomerase (gmhA) (Burkholderia pseudomallei (strain K96243)).